Consider the following 335-residue polypeptide: MQALVNKIWYQGHPLRWLLLPLSALFAFITAFRRSLFRLGIKSQTTLPVPVIVVGNITVGGSGKTPTVIYLIELLRNQGFNPGVISRGYGAQFQGVKVVTVKDAATDVGDEPAMIVARTGVPMVVGAKRVETAKALLTQFAVDVIICDDGLQHYALGRDIELVVIDGKRGLGNRNLLPAGPLREGEWRLNQVDFVIVNGGPAVANQYEMQLRPCAVLPVSPAVTAEFDSTQPLVAMAGIGHPARFFETLTQQGYQVALSHSFDDHQAYDKRQLCELAASRPLMMTEKDAVKCRDFAQENWWYLAVDAKLSPQFDQQLLSRLRSVAAAKKGKSHGV.

Residue 58–65 (TVGGSGKT) participates in ATP binding.

It belongs to the LpxK family.

It catalyses the reaction a lipid A disaccharide + ATP = a lipid IVA + ADP + H(+). It participates in glycolipid biosynthesis; lipid IV(A) biosynthesis; lipid IV(A) from (3R)-3-hydroxytetradecanoyl-[acyl-carrier-protein] and UDP-N-acetyl-alpha-D-glucosamine: step 6/6. In terms of biological role, transfers the gamma-phosphate of ATP to the 4'-position of a tetraacyldisaccharide 1-phosphate intermediate (termed DS-1-P) to form tetraacyldisaccharide 1,4'-bis-phosphate (lipid IVA). This is Tetraacyldisaccharide 4'-kinase from Shewanella oneidensis (strain ATCC 700550 / JCM 31522 / CIP 106686 / LMG 19005 / NCIMB 14063 / MR-1).